Here is a 277-residue protein sequence, read N- to C-terminus: MAVRGILGRQRREYRTPEPHPSGARPPKLGDLVPEHVAIVMDGNGRWAKERGLPRTEGHKVGAEQVMDVLQGAIEMGVGNISLYAFSTENWKRSPEEVRFLMNFNRDFIRKSRDTLDELGVRVRWAGRMPRLWKSVAKELQVAQEQTKDNDRLTLYFCMNYGGRAEIADAAQALAEDVRAGKLDPAKVNEKTLAKYLYYPDMPDVDLFLRPSGEQRTSNYLLWQSAYAEMVFQDVLWPDFDRRDLWRACLEFASRDRRFGGAIPNEELLAMEGRSTR.

The segment at methionine 1 to glycine 30 is disordered. Residue aspartate 42 is part of the active site. Aspartate 42 lines the Mg(2+) pocket. Substrate-binding positions include glycine 43–arginine 46, tryptophan 47, arginine 55, histidine 59, and serine 87–glutamate 89. Asparagine 90 serves as the catalytic Proton acceptor. Substrate contacts are provided by residues tryptophan 91, arginine 93, arginine 210, and arginine 216 to serine 218. Glutamate 229 contacts Mg(2+).

The protein belongs to the UPP synthase family. As to quaternary structure, homodimer. Mg(2+) is required as a cofactor.

Catalyzes the condensation of isopentenyl diphosphate (IPP) with allylic pyrophosphates generating different type of terpenoids. This is Isoprenyl transferase 1 from Streptomyces coelicolor (strain ATCC BAA-471 / A3(2) / M145).